The primary structure comprises 361 residues: [LysW]-lysine hydrolase (361 aa).

Position 67 (H67) interacts with Zn(2+). D69 is a catalytic residue. A Zn(2+)-binding site is contributed by D91. The active-site Proton acceptor is the E124. 3 residues coordinate Zn(2+): E125, E148, and H326.

It belongs to the peptidase M20A family. LysK subfamily. Requires Zn(2+) as cofactor. It depends on Co(2+) as a cofactor.

Its subcellular location is the cytoplasm. The enzyme catalyses [amino-group carrier protein]-C-terminal-gamma-(L-lysyl)-L-glutamate + H2O = [amino-group carrier protein]-C-terminal-L-glutamate + L-lysine. The protein operates within amino-acid biosynthesis; L-lysine biosynthesis via AAA pathway; L-lysine from L-alpha-aminoadipate (Thermus route): step 5/5. Functionally, catalyzes the release of L-lysine from [LysW]-gamma-L-lysine. This Thermus thermophilus (strain ATCC 27634 / DSM 579 / HB8) protein is [LysW]-lysine hydrolase.